A 638-amino-acid chain; its full sequence is Epithelial sodium channel subunit beta (638 aa).

Topologically, residues 1–50 are cytoplasmic; it reads MPVKKYLLKCLHRLQKGPGYTYKELLVWYCNNTNTHGPKRIICEGPKKKA. Residues 51–71 traverse the membrane as a helical segment; that stretch reads MWFLLTLLFACLVCWQWGVFI. Residues 72–530 lie on the Extracellular side of the membrane; that stretch reads QTYLSWEVSV…GGQFGFWMGG (459 aa). 9 disulfides stabilise this stretch: C98–C270, C182–C187, C194–C201, C247–C254, C359–C446, C384–C442, C388–C438, C397–C424, and C399–C413. N135 and N141 each carry an N-linked (GlcNAc...) asparagine glycan. N-linked (GlcNAc...) asparagine glycosylation is present at N205. Residues 531-551 form a helical membrane-spanning segment; sequence SVLCLIEFGEIIIDFIWITII. Over 552–638 the chain is Cytoplasmic; it reads KLVASCKGLR…MESDSEVEAI (87 aa). Positions 594-620 are disordered; it reads SCRPHGEVYPDQQTLPIPGTPPPNYDS. The PY motif; recruits WW domain-containing proteins and is thereby required for ubiquitination and inhibition of the channel by NEDD4 and NEDD4L signature appears at 614 to 618; the sequence is PPPNY. Residues S631 and S633 each carry the phosphoserine modification.

The protein belongs to the amiloride-sensitive sodium channel (TC 1.A.6) family. SCNN1B subfamily. Component of the heterotrimeric epithelial sodium channel (ENaC) composed of an alpha/SCNN1A, a beta/SCNN1B and a gamma/SCNN1G subunit. Interacts with WWP1 (via WW domains). Interacts with WWP2 (via WW domains); inhibits the channel. Interacts with the full-length immature form of PCSK9 (pro-PCSK9). Interacts (N-glycosylated) with BPIFA1; the interaction is direct and inhibits the proteolytic processing of SCNN1A and SCNN1G and the activation of ENaC. In terms of processing, ubiquitinated. Can be ubiquitinated at multiple sites and undergo monoubiquitination and polyubiquitination. Ubiquitination by NEDD4 or NEDD4L inhibits the ENaC channel through endocytosis, intracellular retention and degradation of its individual subunits. However, some studies could not confirm the ubiquitination of this subunit of the ENaC. N-glycosylated. N-glycosylation is required for interaction with BPIFA1. Post-translationally, phosphorylated on serine and threonine residues. Aldosterone and insulin increase the basal level of phosphorylation. As to expression, lung and kidney.

The protein resides in the apical cell membrane. It is found in the cytoplasmic vesicle membrane. The enzyme catalyses Na(+)(in) = Na(+)(out). With respect to regulation, originally identified and characterized by its inhibition by the diuretic drug amiloride. In terms of biological role, this is one of the three pore-forming subunits of the heterotrimeric epithelial sodium channel (ENaC), a critical regulator of sodium balance and fluid homeostasis. ENaC operates in epithelial tissues, where it mediates the electrodiffusion of sodium ions from extracellular fluid through the apical membrane of cells, with water following osmotically. It plays a key role in maintaining sodium homeostasis through electrogenic sodium reabsorption in the kidneys. This subunit is not essential for ENaC function in airway surface liquid homeostasis and proper mucus clearance. The protein is Epithelial sodium channel subunit beta of Mus musculus (Mouse).